Here is a 306-residue protein sequence, read N- to C-terminus: Ribonuclease Z (306 aa).

Zn(2+) is bound by residues H63, H65, D67, H68, H141, D211, and H269. D67 serves as the catalytic Proton acceptor.

Belongs to the RNase Z family. Homodimer. The cofactor is Zn(2+).

It carries out the reaction Endonucleolytic cleavage of RNA, removing extra 3' nucleotides from tRNA precursor, generating 3' termini of tRNAs. A 3'-hydroxy group is left at the tRNA terminus and a 5'-phosphoryl group is left at the trailer molecule.. Functionally, zinc phosphodiesterase, which displays some tRNA 3'-processing endonuclease activity. Probably involved in tRNA maturation, by removing a 3'-trailer from precursor tRNA. The protein is Ribonuclease Z of Macrococcus caseolyticus (strain JCSC5402) (Macrococcoides caseolyticum).